The sequence spans 577 residues: MLFSKLFAPTLKEPPKDAVLKSHKHLAQAGYIYQVGSGIYNFLPLAKKVLDKIENITHKRMQEHGAQNILMSFVVLASLWEKSGRLDKYGKELLVFKDRKDNDFVLSPTLEENITEIAANFIKSYKQLPVHLYQIHTKFRDEIRPRFGLVRAREFIMKDGYSFHEDAESLDKEFLNTQSAYKEILSDLGLDFRIVEADSGAIGGSKSREFVVLTECGEDTIVVCQNCDYAANIEIAKRSKRPEPLNVPKAQLAKFPTPNTTSAQSVAEFFKTEPYFVLKALVKKVIHKDKETLACFFVRGDDNLEETKALNALNIIGANALELREANEEDLNHAGLIAGFIGPYGLKKHVSYIIFDEDLKEGDCLIAGANEKDFHAVGVDLKGFENLVYADIVQIKESDHCPNCQGALKYHKSLEVGHIFKLGQGYAKSLKASFLDKNGKEQFFEMGCYGIGISRLLSAILEQKSDDLGCVWTKNTAPFDVVIVVSNWKDEAQKKLAFEVYERLLQKGVDALLDDRDARFGAKMRDFELIGERLALIVGKQALESKEFECIKRANLEKQTLKDTELEEKILEMLASE.

Belongs to the class-II aminoacyl-tRNA synthetase family. ProS type 1 subfamily. In terms of assembly, homodimer.

Its subcellular location is the cytoplasm. It carries out the reaction tRNA(Pro) + L-proline + ATP = L-prolyl-tRNA(Pro) + AMP + diphosphate. Catalyzes the attachment of proline to tRNA(Pro) in a two-step reaction: proline is first activated by ATP to form Pro-AMP and then transferred to the acceptor end of tRNA(Pro). As ProRS can inadvertently accommodate and process non-cognate amino acids such as alanine and cysteine, to avoid such errors it has two additional distinct editing activities against alanine. One activity is designated as 'pretransfer' editing and involves the tRNA(Pro)-independent hydrolysis of activated Ala-AMP. The other activity is designated 'posttransfer' editing and involves deacylation of mischarged Ala-tRNA(Pro). The misacylated Cys-tRNA(Pro) is not edited by ProRS. In Helicobacter pylori (strain G27), this protein is Proline--tRNA ligase.